A 469-amino-acid polypeptide reads, in one-letter code: ATP synthase subunit beta (469 aa).

156 to 163 serves as a coordination point for ATP; sequence GGAGVGKT.

This sequence belongs to the ATPase alpha/beta chains family. In terms of assembly, F-type ATPases have 2 components, CF(1) - the catalytic core - and CF(0) - the membrane proton channel. CF(1) has five subunits: alpha(3), beta(3), gamma(1), delta(1), epsilon(1). CF(0) has three main subunits: a(1), b(2) and c(9-12). The alpha and beta chains form an alternating ring which encloses part of the gamma chain. CF(1) is attached to CF(0) by a central stalk formed by the gamma and epsilon chains, while a peripheral stalk is formed by the delta and b chains.

Its subcellular location is the cell membrane. It catalyses the reaction ATP + H2O + 4 H(+)(in) = ADP + phosphate + 5 H(+)(out). In terms of biological role, produces ATP from ADP in the presence of a proton gradient across the membrane. The catalytic sites are hosted primarily by the beta subunits. This Lactococcus lactis subsp. lactis (strain IL1403) (Streptococcus lactis) protein is ATP synthase subunit beta.